Reading from the N-terminus, the 1398-residue chain is DNA-directed RNA polymerase subunit beta' (1398 aa).

Zn(2+)-binding residues include Cys71, Cys73, Cys86, and Cys89. Mg(2+) contacts are provided by Asp462, Asp464, and Asp466. 4 residues coordinate Zn(2+): Cys810, Cys884, Cys891, and Cys894.

Belongs to the RNA polymerase beta' chain family. The RNAP catalytic core consists of 2 alpha, 1 beta, 1 beta' and 1 omega subunit. When a sigma factor is associated with the core the holoenzyme is formed, which can initiate transcription. It depends on Mg(2+) as a cofactor. The cofactor is Zn(2+).

It carries out the reaction RNA(n) + a ribonucleoside 5'-triphosphate = RNA(n+1) + diphosphate. Functionally, DNA-dependent RNA polymerase catalyzes the transcription of DNA into RNA using the four ribonucleoside triphosphates as substrates. The protein is DNA-directed RNA polymerase subunit beta' of Mesorhizobium japonicum (strain LMG 29417 / CECT 9101 / MAFF 303099) (Mesorhizobium loti (strain MAFF 303099)).